We begin with the raw amino-acid sequence, 379 residues long: MNSSVQGYRRVVVKLGTSVLTSGSKSLDKAHMVELARQMAGLMKSGVEVVLVTSGAIAAGREHLGYPVLPDTMANKQLLAAVGQSQLILAWSQLFSIYGLHVGQLLLTRADLHDRERYLNARDTLNALLAQGIVPIINENDAVATTEIKVGDNDNLSARAALLCDADLLMLLTDQKGLFDADPRKEPNARLIPEVEHIDDSLRLLAGGSVSGLGTGGMATKLQAADIARRAGVEVIIASGHHPEVIKKAVHREAVGTRFLAIESPLESRKQWILAGPKAKGRLLLDIGAVAAVTCRGRSLLSKGITGVEGQFERGDTLELVSPDGRVVARGMARYQSQALNLIAGKHSDEIEPLLGYDYGDAVVHRNDMVVLEMIGEAK.

Position 14 (lysine 14) interacts with ATP. Substrate contacts are provided by serine 54, aspartate 141, and asparagine 153. ATP contacts are provided by residues threonine 173 to aspartate 174 and threonine 215 to lysine 221. One can recognise a PUA domain in the interval lysine 280–aspartate 358.

Belongs to the glutamate 5-kinase family.

The protein resides in the cytoplasm. The enzyme catalyses L-glutamate + ATP = L-glutamyl 5-phosphate + ADP. Its pathway is amino-acid biosynthesis; L-proline biosynthesis; L-glutamate 5-semialdehyde from L-glutamate: step 1/2. Catalyzes the transfer of a phosphate group to glutamate to form L-glutamate 5-phosphate. The polypeptide is Glutamate 5-kinase (Shewanella amazonensis (strain ATCC BAA-1098 / SB2B)).